We begin with the raw amino-acid sequence, 415 residues long: Gamma-glutamyl phosphate reductase (415 aa).

This sequence belongs to the gamma-glutamyl phosphate reductase family.

The protein localises to the cytoplasm. It carries out the reaction L-glutamate 5-semialdehyde + phosphate + NADP(+) = L-glutamyl 5-phosphate + NADPH + H(+). It participates in amino-acid biosynthesis; L-proline biosynthesis; L-glutamate 5-semialdehyde from L-glutamate: step 2/2. Its function is as follows. Catalyzes the NADPH-dependent reduction of L-glutamate 5-phosphate into L-glutamate 5-semialdehyde and phosphate. The product spontaneously undergoes cyclization to form 1-pyrroline-5-carboxylate. The chain is Gamma-glutamyl phosphate reductase from Mycobacterium bovis (strain BCG / Pasteur 1173P2).